We begin with the raw amino-acid sequence, 112 residues long: UPF0060 membrane protein SCO3297 (112 aa).

4 consecutive transmembrane segments (helical) span residues 8 to 28, 33 to 53, 62 to 82, and 88 to 108; these read ALFV…WQGV, GWLW…VATF, ILAA…VVAD, and RWDI…MWAP.

Belongs to the UPF0060 family.

Its subcellular location is the cell membrane. This Streptomyces coelicolor (strain ATCC BAA-471 / A3(2) / M145) protein is UPF0060 membrane protein SCO3297.